The following is a 182-amino-acid chain: Ribosome maturation factor RimM (182 aa).

A PRC barrel domain is found at 103–182; that stretch reads VGDYYWKDLI…TIEVDWDPGF (80 aa).

This sequence belongs to the RimM family. As to quaternary structure, binds ribosomal protein uS19.

The protein resides in the cytoplasm. Its function is as follows. An accessory protein needed during the final step in the assembly of 30S ribosomal subunit, possibly for assembly of the head region. Essential for efficient processing of 16S rRNA. May be needed both before and after RbfA during the maturation of 16S rRNA. It has affinity for free ribosomal 30S subunits but not for 70S ribosomes. The polypeptide is Ribosome maturation factor RimM (Pectobacterium atrosepticum (strain SCRI 1043 / ATCC BAA-672) (Erwinia carotovora subsp. atroseptica)).